Here is a 195-residue protein sequence, read N- to C-terminus: Imidazoleglycerol-phosphate dehydratase (195 aa).

Belongs to the imidazoleglycerol-phosphate dehydratase family.

Its subcellular location is the cytoplasm. The catalysed reaction is D-erythro-1-(imidazol-4-yl)glycerol 3-phosphate = 3-(imidazol-4-yl)-2-oxopropyl phosphate + H2O. It participates in amino-acid biosynthesis; L-histidine biosynthesis; L-histidine from 5-phospho-alpha-D-ribose 1-diphosphate: step 6/9. The protein is Imidazoleglycerol-phosphate dehydratase of Nitrosomonas eutropha (strain DSM 101675 / C91 / Nm57).